We begin with the raw amino-acid sequence, 942 residues long: Chitin synthase 2 (942 aa).

Positions 1–13 are enriched in basic and acidic residues; the sequence is MAYHYSHDSDRRQ. Positions 1–132 are disordered; sequence MAYHYSHDSD…PSHTDYSDED (132 aa). The segment covering 18 to 33 has biased composition (low complexity); it reads YNYPSNYSNPSQYSIP. N-linked (GlcNAc...) asparagine glycosylation occurs at Asn-23. The span at 71 to 80 shows a compositional bias: polar residues; that stretch reads PQPTASSMTS. N-linked (GlcNAc...) asparagine glycosylation occurs at Asn-587. The next 4 membrane-spanning stretches (helical) occupy residues 590-610, 625-645, 663-683, and 696-716; these read IFAATYAMVCFWRIWTSGHGI, FNLLFNWLSVSSFYLAFFFLI, IFQVFNKVYIALIFVVLVCSL, and FCIFMFAVCQGILLYCAGWTV. A glycan (N-linked (GlcNAc...) asparagine) is linked at Asn-736. The next 2 helical transmembrane spans lie at 739–759 and 770–790; these read FVQLALSLMATYGLYLISSLL and FVQYLLLLPSYVNILLIYAMC. N-linked (GlcNAc...) asparagine glycosylation occurs at Asn-803. Helical transmembrane passes span 873 to 893 and 916 to 936; these read VVLLFLGSNMLIILLFTSSTF and IFYAVLGLSALRFAGCLLYLI.

Belongs to the chitin synthase family. Class III subfamily.

It localises to the cell membrane. It catalyses the reaction [(1-&gt;4)-N-acetyl-beta-D-glucosaminyl](n) + UDP-N-acetyl-alpha-D-glucosamine = [(1-&gt;4)-N-acetyl-beta-D-glucosaminyl](n+1) + UDP + H(+). In terms of biological role, polymerizes chitin, a structural polymer of the cell wall and septum, by transferring the sugar moiety of UDP-GlcNAc to the non-reducing end of the growing chitin polymer. This Cryptococcus neoformans var. grubii serotype A (strain H99 / ATCC 208821 / CBS 10515 / FGSC 9487) (Filobasidiella neoformans var. grubii) protein is Chitin synthase 2.